The sequence spans 152 residues: Deoxyuridine 5'-triphosphate nucleotidohydrolase (152 aa).

Residues 72–74 (RSG), asparagine 85, and 89–91 (TID) each bind substrate.

The protein belongs to the dUTPase family. The cofactor is Mg(2+).

The enzyme catalyses dUTP + H2O = dUMP + diphosphate + H(+). Its pathway is pyrimidine metabolism; dUMP biosynthesis; dUMP from dCTP (dUTP route): step 2/2. In terms of biological role, this enzyme is involved in nucleotide metabolism: it produces dUMP, the immediate precursor of thymidine nucleotides and it decreases the intracellular concentration of dUTP so that uracil cannot be incorporated into DNA. The polypeptide is Deoxyuridine 5'-triphosphate nucleotidohydrolase (Bradyrhizobium sp. (strain ORS 278)).